The chain runs to 71 residues: Peptide Ctri9819 (71 aa).

The first 23 residues, 1–23 (MKTVSTVAILAIFLLIVITTIET), serve as a signal peptide directing secretion. Leucine 34 carries the leucine amide modification. Residues 38–71 (SKLETFKRIARTLSAGISAKRSLEDVNSLTGMSS) constitute a propeptide that is removed on maturation.

The protein belongs to the non-disulfide-bridged peptide (NDBP) superfamily. Short antimicrobial peptide (group 4) family. As to expression, expressed by the venom gland.

The protein localises to the secreted. Antimicrobial peptide. This is Peptide Ctri9819 from Chaerilus tricostatus (Scorpion).